The following is a 467-amino-acid chain: Thiohydroximate-O-sulfate sulfur/sulfate-lyase (nitrile-forming) NSP3 (467 aa).

A Jacalin-type lectin domain is found at 2–143 (AQKLVAQGGE…LHSLGAYVSL (142 aa)). 5 Kelch repeats span residues 177-225 (KIYS…VRMV), 230-276 (TLYT…SMAA), 280-329 (NVYV…VVQG), 331-375 (VWIV…ASAA), and 379-434 (HIVI…ASTT). The active-site Proton donor is the arginine 237. Residues arginine 237, serine 270, arginine 292, glycine 321, and valine 370 each coordinate a (Z)-N-(sulfonatooxy)alkanimidothioate. The active-site Proton donor is arginine 292. Fe(2+) contacts are provided by glutamate 386, aspartate 390, and histidine 394. Tryptophan 429 lines the a (Z)-N-(sulfonatooxy)alkanimidothioate pocket.

The protein belongs to the jacalin lectin family. The cofactor is Fe(2+). In terms of tissue distribution, mainly expressed in roots, and, at low levels, in seedlings and leaves. Observed in seeds.

The enzyme catalyses a (Z)-N-(sulfonatooxy)alkanimidothioate = a nitrile + sulfur + sulfate. It carries out the reaction (Z)-phenyl-N-(sulfonatooxy)methanimidothioate = phenylacetonitrile + sulfur + sulfate. It catalyses the reaction (Z)-N-(sulfonatooxy)prop-2-enimidothioate = but-3-enenitrile + sulfur + sulfate. Functionally, specifier protein responsible for constitutive and herbivore-induced simple nitrile formation, especially in roots. Promotes simple nitriles, but not epithionitrile or thiocyanate formation. Converts allylglucosinolate and benzylglucosinolate (glucotropaeolin) to their corresponding simple nitriles in the presence of myrosinase. In Arabidopsis thaliana (Mouse-ear cress), this protein is Thiohydroximate-O-sulfate sulfur/sulfate-lyase (nitrile-forming) NSP3.